The following is a 68-amino-acid chain: DNA-directed RNA polymerase subunit omega (68 aa).

The protein belongs to the RNA polymerase subunit omega family. As to quaternary structure, the RNAP catalytic core consists of 2 alpha, 1 beta, 1 beta' and 1 omega subunit. When a sigma factor is associated with the core the holoenzyme is formed, which can initiate transcription.

It carries out the reaction RNA(n) + a ribonucleoside 5'-triphosphate = RNA(n+1) + diphosphate. Its function is as follows. Promotes RNA polymerase assembly. Latches the N- and C-terminal regions of the beta' subunit thereby facilitating its interaction with the beta and alpha subunits. This Neisseria meningitidis serogroup C (strain 053442) protein is DNA-directed RNA polymerase subunit omega.